We begin with the raw amino-acid sequence, 251 residues long: Ell1-associated factor 1 (251 aa).

2 disordered regions span residues 110–187 (SKTV…DMEV) and 201–251 (FDQE…EDED). The span at 112–123 (TVPSNAITQSDN) shows a compositional bias: polar residues. Residues 124 to 135 (SQISESKSTSQS) show a composition bias toward low complexity. Residues 143–157 (RRKEKELEASKDGKI) are compositionally biased toward basic and acidic residues. Polar residues-rich tracts occupy residues 204 to 220 (EFNSIDDPSTVSQTASK) and 236 to 251 (SSAQAEGISSASEDED). Ser-247 is subject to Phosphoserine.

Belongs to the EAF family. As to quaternary structure, forms a stable heterodimer with ell1. Ell1-eaf1 complex interacts with RNA polymerase II.

It is found in the nucleus. Its function is as follows. Activates transcription elongation by RNA polymerase II and pyrophosphorolysis as a complex with ell1. Acts as a transcriptional transactivator of ell1 elongation activities. This is Ell1-associated factor 1 (eaf1) from Schizosaccharomyces pombe (strain 972 / ATCC 24843) (Fission yeast).